Reading from the N-terminus, the 217-residue chain is uncharacterized protein (217 aa).

2 disordered regions span residues 1-85 and 167-189; these read MGVK…RGNT and KLRSPPHKDQHNSATNKDQEPDE. Basic and acidic residues predominate over residues 38–48; sequence AKSDKDKRKGS. A compositionally biased stretch (low complexity) spans 60–78; that stretch reads NALPTKNLTTPPALNPLTT. A compositionally biased stretch (basic and acidic residues) spans 172-189; the sequence is PHKDQHNSATNKDQEPDE.

This is an uncharacterized protein from Saccharomyces cerevisiae (strain ATCC 204508 / S288c) (Baker's yeast).